A 532-amino-acid chain; its full sequence is Di/tripeptide-binding protein 2 (532 aa).

A signal peptide spans 1–24; sequence MRPRSALRYSLLLLAFAASAAIQA.

Belongs to the bacterial solute-binding protein 5 family. In terms of assembly, the complex is composed of two ATP-binding proteins (DppD and DppF), two transmembrane proteins (DppB and DppC) and a solute-binding protein (DppA2). Five orthologous SBPs (DppA1-A5) are present in P.aeruginosa, which increases the substrate specificity of the DppBCDF transporter.

Part of the ABC transporter DppABCDF involved in the uptake of various di/tripeptides. Shows high flexibility on substrate recognition. Efficiently uses tripeptides. In Pseudomonas aeruginosa (strain UCBPP-PA14), this protein is Di/tripeptide-binding protein 2.